Here is a 256-residue protein sequence, read N- to C-terminus: tRNA-cytidine(32) 2-sulfurtransferase (256 aa).

The short motif at 35–40 (SGGKDS) is the PP-loop motif element. [4Fe-4S] cluster-binding residues include cysteine 110, cysteine 113, and cysteine 201.

It belongs to the TtcA family. As to quaternary structure, homodimer. It depends on Mg(2+) as a cofactor. [4Fe-4S] cluster serves as cofactor.

It localises to the cytoplasm. The catalysed reaction is cytidine(32) in tRNA + S-sulfanyl-L-cysteinyl-[cysteine desulfurase] + AH2 + ATP = 2-thiocytidine(32) in tRNA + L-cysteinyl-[cysteine desulfurase] + A + AMP + diphosphate + H(+). It functions in the pathway tRNA modification. Functionally, catalyzes the ATP-dependent 2-thiolation of cytidine in position 32 of tRNA, to form 2-thiocytidine (s(2)C32). The sulfur atoms are provided by the cysteine/cysteine desulfurase (IscS) system. The sequence is that of tRNA-cytidine(32) 2-sulfurtransferase from Coxiella burnetii (strain RSA 493 / Nine Mile phase I).